The chain runs to 287 residues: Acetyl-coenzyme A carboxylase carboxyl transferase subunit beta (287 aa).

The CoA carboxyltransferase N-terminal domain occupies 25–287 (VWTKCSACEQ…KMLNTHVIEE (263 aa)). Zn(2+)-binding residues include Cys-29, Cys-32, Cys-48, and Cys-51. The C4-type zinc finger occupies 29-51 (CSACEQVLYRAELERNLEVCPKC).

It belongs to the AccD/PCCB family. As to quaternary structure, acetyl-CoA carboxylase is a heterohexamer composed of biotin carboxyl carrier protein (AccB), biotin carboxylase (AccC) and two subunits each of ACCase subunit alpha (AccA) and ACCase subunit beta (AccD). Zn(2+) serves as cofactor.

It localises to the cytoplasm. It carries out the reaction N(6)-carboxybiotinyl-L-lysyl-[protein] + acetyl-CoA = N(6)-biotinyl-L-lysyl-[protein] + malonyl-CoA. It participates in lipid metabolism; malonyl-CoA biosynthesis; malonyl-CoA from acetyl-CoA: step 1/1. In terms of biological role, component of the acetyl coenzyme A carboxylase (ACC) complex. Biotin carboxylase (BC) catalyzes the carboxylation of biotin on its carrier protein (BCCP) and then the CO(2) group is transferred by the transcarboxylase to acetyl-CoA to form malonyl-CoA. This is Acetyl-coenzyme A carboxylase carboxyl transferase subunit beta from Aeromonas hydrophila subsp. hydrophila (strain ATCC 7966 / DSM 30187 / BCRC 13018 / CCUG 14551 / JCM 1027 / KCTC 2358 / NCIMB 9240 / NCTC 8049).